A 495-amino-acid polypeptide reads, in one-letter code: Cytochrome P450 monooxygenase FrzC (495 aa).

The helical transmembrane segment at 8–28 (GLVVGLWVTYHILLGTYNVFF) threads the bilayer. Cys-437 lines the heme pocket.

Belongs to the cytochrome P450 family. It depends on heme as a cofactor.

The protein resides in the membrane. The enzyme catalyses (S,S)-2,5-di-(p-hydroxybenzyl)piperazine + reduced [NADPH--hemoprotein reductase] + O2 = (1S,4S)-4-[(4-hydroxyphenyl)methyl]-2,5-diazaspiro[bicyclo[3.2.1]octane-6,1'-cyclohexane]-2',5'-dien-4'-one + oxidized [NADPH--hemoprotein reductase] + 2 H2O + H(+). The protein operates within secondary metabolite biosynthesis. Its function is as follows. Cytochrome P450 monooxygenase; part of the gene cluster that mediates the biosynthesis of the alkaloid (-)-FR901483, a potent immunosuppressant that shows efficacy in animal models and a probable inhibitor of purine nucleotide biosynthesis by targeting phosphoribosylpyrophosphate amidotransferase (PPAT). Within the pathway, FrzC catalyzes the coupling between N10 and C1' to produce a 1,4-diazabicyclo[3.2.1]octane spiro-fused to a 2,5-cyclohexadienone. FrzC probably first catalyzes homolysis of the N-H bond to generate the N10 radical which is followed by an O-H abstraction to give the phenolic radical which can be delocalized to C1'. Radical coupling between N10 and C1' then forms. The biosynthesis of (-)-FR901483 starts with the condensation of two L-tyrosines to yield (S,S)-dityrosyl-piperazine. This process occurs in 3 steps with the non-canonical nonribosomal peptide synthetase FrzA catalyzing the reduction of L-tyrosine into L-tyrosinal, the spontaneous condensation of 2 L-tyrosinal units, and the subsequent reduction by the NmrA-like family domain-containing oxidoreductase FrzB. The cytochrome P450 monooxygenase FrzC then performs coupling between N10 and C1' to morph the piperazine into a 1,4-diazabicyclo[3.2.1]octane spiro-fused to a 2,5-cyclohexadienone. The dienone portion is further reduced to cyclohexanone by the flavin-dependent reductase FrzD. The methyltranserases (MTs) FrzE and FrzF are then involved in the methylation at the C10' amine and the C4 phenolic oxygen, respectively. The order of the two MTs appear to be interchangeable. Cleavage of the C9-N10' bond by the dioxygenase FrzG then leads to formation of a conjugated iminium. In addition to the oxidation of C9, an additional dehydrogenation between C7 and C8 can occur to give a likely shunt product. The next biosynthetic step is the intramolecular aldol condensation catalyzed by the newly identified aldolase FrzH to yield an aza-tricyclic product with the formation of a C9-C3' bond. The short-chain dehydrogenase/reductase FrzI then produces dephospho-(-)-FR901483 that is phosphorylated at C4'-OH into (-)-FR901483 by the phosphotransferase FrzJ. This Cladobotryum sp protein is Cytochrome P450 monooxygenase FrzC.